A 210-amino-acid polypeptide reads, in one-letter code: Inner membrane-spanning protein YciB (210 aa).

The next 6 membrane-spanning stretches (helical) occupy residues 19 to 39 (LVLELGPLMVFFFANSRGDWL), 53 to 73 (IFIATGLFMAATATALIVSWI), 78 to 98 (LPMMPLISGIVVFVFGALTLW), 115 to 135 (LFGAILLGGLLFGKSLLGYVF), 148 to 168 (KLTIRWGVFFLFLAVLNEIVW), and 175 to 195 (FWVAFKVWGTMPITILFTLAQ).

Belongs to the YciB family.

The protein resides in the cell inner membrane. Functionally, plays a role in cell envelope biogenesis, maintenance of cell envelope integrity and membrane homeostasis. In Sinorhizobium fredii (strain NBRC 101917 / NGR234), this protein is Inner membrane-spanning protein YciB.